A 560-amino-acid polypeptide reads, in one-letter code: MNINVADLLNGNYILLLFVVLALGLCLGKLRLGSVQLGNSIGVLVVSLLLGQQHFSINTDALNLGFMLFIFCVGVEAGPNFFSIFFRDGKNYLMLALVMVGSALLIALGLGRAFGWDIGLTAGMLAGSMTSTPVLVGAGDTLRHAGMEGAQLAQALDHLSLGYALTYLIGLVSLIFGARYLPKLQHQDLQTSAQQIARERGLDTDANRKVYLPVIRAYRVGPELVAWADGKNLRELGIYRQTGCYIERIRRNGILASPDGDAVLQMGDEIALVGYPDAHARLDPSFRNGKEVFDRDLLDMRIVTEEIVVKNHNVVGRRLGQLKLTDHGCFLNRVIRSQIEMPIDDNIVLNKGDVLQVSGDARRVKTIADRIGFISIHSQVTDLLAFCAFFIVGLMIGMITFQFSSFSFGIGNAAGLLFAGIMLGFLRANHPTFGYIPQGALMMVKEFGLMVFMAGVGLSAGSGIGHGLGAVGGQMLFAGLIVSLLPVVICFLFGAYVLRMNRALLFGAMMGARTCAPAMEIISDTARSNIPALGYAGTYAIANVLLTLAGTLIVIIWPGT.

Transmembrane regions (helical) follow at residues 8–28 (LLNG…LCLG), 32–52 (LGSV…LLGQ), 66–86 (FMLF…SIFF), 91–111 (NYLM…LGLG), and 158–178 (HLSL…IFGA). RCK C-terminal domains are found at residues 200–288 (RGLD…SFRN) and 292–373 (VFDR…RIGF). The next 5 helical transmembrane spans lie at 383-403 (LLAF…TFQF), 406-426 (FSFG…LGFL), 447-467 (FGLM…IGHG), 475-495 (MLFA…LFGA), and 539-559 (YAIA…IWPG).

The protein belongs to the AAE transporter (TC 2.A.81) family. YbjL subfamily.

The protein localises to the cell membrane. The sequence is that of Putative transport protein ESA_02488 from Cronobacter sakazakii (strain ATCC BAA-894) (Enterobacter sakazakii).